The sequence spans 800 residues: Phenylalanine--tRNA ligase beta subunit (800 aa).

A tRNA-binding domain is found at 39 to 154; the sequence is TKDIKNLVVG…ESQVPGTDAL (116 aa). Residues 408 to 483 enclose the B5 domain; that stretch reads AFITPIDITA…RIYGYDDIPS (76 aa). Residues Asp-461, Asp-467, Glu-470, and Glu-471 each contribute to the Mg(2+) site. The FDX-ACB domain maps to 708–800; that stretch reads PRFPGMSRDI…ALIEQGAVIR (93 aa).

The protein belongs to the phenylalanyl-tRNA synthetase beta subunit family. Type 1 subfamily. Tetramer of two alpha and two beta subunits. Mg(2+) is required as a cofactor.

The protein localises to the cytoplasm. The catalysed reaction is tRNA(Phe) + L-phenylalanine + ATP = L-phenylalanyl-tRNA(Phe) + AMP + diphosphate + H(+). In Staphylococcus aureus (strain MRSA252), this protein is Phenylalanine--tRNA ligase beta subunit.